The chain runs to 560 residues: Protein DETOXIFICATION 45, chloroplastic (560 aa).

A chloroplast-targeting transit peptide spans M1–K75. 12 helical membrane-spanning segments follow: residues L109–M129, V147–A167, A209–G229, F250–I270, P280–Y300, G308–L328, F353–A373, V389–S411, F426–F446, G466–L486, Y495–P515, and V523–M543.

Belongs to the multi antimicrobial extrusion (MATE) (TC 2.A.66.1) family. As to expression, ubiquitous.

The protein localises to the plastid. Its subcellular location is the chloroplast membrane. In Arabidopsis thaliana (Mouse-ear cress), this protein is Protein DETOXIFICATION 45, chloroplastic.